The primary structure comprises 521 residues: Circadian clock oscillator protein KaiC (521 aa).

KaiC domains lie at 1-248 (MNEP…INIF) and 262-521 (ARIS…LDEE). ATP is bound by residues glycine 50, threonine 51, glycine 52, lysine 53, threonine 54, leucine 55, serine 90, lysine 225, leucine 226, arginine 227, threonine 229, histidine 231, threonine 241, threonine 291, glycine 292, threonine 293, glycine 294, lysine 295, threonine 296, and leucine 297. Threonine 54 serves as a coordination point for Mg(2+). Residue threonine 296 participates in Mg(2+) binding. Residue glutamate 319 participates in Mg(2+) binding. An ATP-binding site is contributed by tryptophan 332. Position 432 is a phosphoserine; by autocatalysis (serine 432). At threonine 433 the chain carries Phosphothreonine; by autocatalysis. Arginine 452, lysine 458, methionine 459, arginine 460, serine 462, histidine 464, and lysine 466 together coordinate ATP.

Belongs to the KaiC family. In terms of assembly, homohexamer; hexamerization is dependent on ATP-binding. The KaiABC complex composition changes during the circadian cycle to control KaiC phosphorylation. Complexes KaiC(6), KaiA(2-4):KaiC(6), KaiB(6):KaiC(6) and KaiC(6):KaiB(6):KaiA(12) are among the most important forms, many form cooperatively. KaiC interacts with SasA, activating its autokinase function and leading to RpaA activation. Mg(2+) serves as cofactor. Phosphorylated on serine and threonine residues by autocatalysis. Has a 4 step phosphorylation cycle; the autokinase acts first on Thr-433, then Ser-432. When Ser-432 is modified KaiC switches to an autophosphatase mode, acting first on phospho-Thr-433 then phospho-Ser-432.

The catalysed reaction is L-seryl-[protein] + ATP = O-phospho-L-seryl-[protein] + ADP + H(+). The enzyme catalyses L-threonyl-[protein] + ATP = O-phospho-L-threonyl-[protein] + ADP + H(+). It catalyses the reaction ATP + H2O = ADP + phosphate + H(+). The interaction with KaiA enhances its phosphorylation status, while the interaction with KaiB decreases it. Its function is as follows. Central component of the KaiABC oscillator complex, which constitutes the main circadian regulator in cyanobacteria. Complex composition changes during the circadian cycle to control KaiC phosphorylation. KaiA stimulates KaiC autophosphorylation, while KaiB sequesters KaiA, leading to KaiC autodephosphorylation. Clock output pathways impact the RpaA transcriptional regulator. KaiC enhances the autophosphorylation activity of SasA, which then transfers its phosphate group to RpaA to activate it. KaiB and KaiC together enhance the phospho-RpaA dephosphatase activity of CikA. Functionally, has a weak, temperature-independent ATPase activity; ATPase activity defines the circadian period. The phosphorylation state of KaiC modulates its ATPase activity and effects KaiB binding. The sequence is that of Circadian clock oscillator protein KaiC from Rippkaea orientalis (strain PCC 8801 / RF-1) (Cyanothece sp. (strain PCC 8801)).